A 217-amino-acid polypeptide reads, in one-letter code: MAAGYRAEDDYDYLFKVVLIGDSGVGKSNLLSRFTRNEFSLESKSTIGVEFATRSLQVDGKVVKAQIWDTAGQERYRAITSAYYRGAVGALLVYDVTRHSTFENVERWLKELRDHTDPNIVVMLVGNKSDLRHLVAVQTDEGKAFAERESLYFMETSALESTNVENAFAEVLTQIYRIVSKRSVEAGDDAGSGPGKGEKINIKDDVSAVKKGGCCSG.

GTP contacts are provided by residues 21–28, 69–73, and 127–130; these read GDSGVGKS, DTAGQ, and NKSD. Residues Cys214 and Cys215 are each lipidated (S-geranylgeranyl cysteine).

This sequence belongs to the small GTPase superfamily. Rab family.

Its subcellular location is the cell membrane. Its function is as follows. Possesses GTPase activity. The protein is Ras-related protein RIC2 (RIC2) of Oryza sativa subsp. japonica (Rice).